A 397-amino-acid chain; its full sequence is Tubby-like protein 8 (397 aa).

The segment covering 1-16 (MAGSRKVNDLLEENKG) has biased composition (basic and acidic residues). The tract at residues 1–46 (MAGSRKVNDLLEENKGNVDTITGSLSTQKGEDKENVSPEKVSTSVE) is disordered. Residues 17 to 28 (NVDTITGSLSTQ) are compositionally biased toward polar residues.

This sequence belongs to the TUB family. Mostly expressed in roots, flowers and siliques.

This is Tubby-like protein 8 from Arabidopsis thaliana (Mouse-ear cress).